We begin with the raw amino-acid sequence, 470 residues long: Nuclear receptor ROR-beta (470 aa).

Positions 18–93 (VIPCKICGDK…LGMSRDAVKF (76 aa)) form a DNA-binding region, nuclear receptor. NR C4-type zinc fingers lie at residues 21–41 (CKIC…CEGC) and 57–81 (CPRQ…LQKC). A compositionally biased stretch (basic and acidic residues) spans 104 to 117 (LYAEVQKHQQRLQE). Residues 104–127 (LYAEVQKHQQRLQEQRQQQSGEAE) are disordered. An NR LBD domain is found at 222–460 (EIDRIAQNII…TLFPPLYKEL (239 aa)). The AF-2 motif lies at 456–461 (LYKELF).

Belongs to the nuclear hormone receptor family. NR1 subfamily. Monomer. Interacts with CRX. Expressed in inner and outer neuroblastic layer as well as in the ganglion cell layer of the developing retina. Expressed in bone marrow osteoprogenitor cells.

The protein localises to the nucleus. The protein resides in the nucleoplasm. In terms of biological role, nuclear receptor that binds DNA as a monomer to ROR response elements (RORE) containing a single core motif half-site 5'-AGGTCA-3' preceded by a short A-T-rich sequence. Considered to have intrinsic transcriptional activity, have some natural ligands such as all-trans retinoic acid (ATRA) and other retinoids which act as inverse agonists repressing the transcriptional activity. Required for normal postnatal development of rod and cone photoreceptor cells. Modulates rod photoreceptors differentiation at least by inducing the transcription factor NRL-mediated pathway. In cone photoreceptor cells, regulates transcription of OPN1SW. Involved in the regulation of the period length and stability of the circadian rhythm. May control cytoarchitectural patterning of neocortical neurons during development. May act in a dose-dependent manner to regulate barrel formation upon innervation of layer IV neurons by thalamocortical axons. May play a role in the suppression of osteoblastic differentiation through the inhibition of RUNX2 transcriptional activity. Isoform 1 is critical for hindlimb motor control and for the differentiation of amacrine and horizontal cells in the retina. Regulates the expression of PTF1A synergistically with FOXN4. This is Nuclear receptor ROR-beta (Rorb) from Mus musculus (Mouse).